Here is a 228-residue protein sequence, read N- to C-terminus: Ankyrin repeat domain-containing protein 46 (228 aa).

ANK repeat units follow at residues 11 to 40 (QTNV…DPNI), 44 to 73 (RGRT…DLLA), 77 to 103 (QGNT…KIDI), and 107 to 138 (QGAT…EVKG). A helical transmembrane segment spans residues 195 to 215 (VLLLIFVIALLSLGIAYYVSG).

Its subcellular location is the membrane. The protein is Ankyrin repeat domain-containing protein 46 (ANKRD46) of Pongo abelii (Sumatran orangutan).